A 419-amino-acid polypeptide reads, in one-letter code: Octopressin receptor (419 aa).

Topologically, residues 1 to 37 are extracellular; it reads MENFTEENLHPWITTTTRVYNNVTIFPQYDDELGKFE. Residues Asn3 and Asn22 are each glycosylated (N-linked (GlcNAc...) asparagine). Residues 38–58 traverse the membrane as a helical segment; that stretch reads IMVLCILCFMALFGNAVVLIV. The Cytoplasmic portion of the chain corresponds to 59–80; sequence LRIKKTTLTRMQLLIVYLSVTD. A helical transmembrane segment spans residues 81–101; that stretch reads ISVALFHILPTIILKINVYFL. At 102-108 the chain is on the extracellular side; sequence GDISACR. An intrachain disulfide couples Cys107 to Cys182. Residues 109-129 form a helical membrane-spanning segment; sequence VYQFITVAELYASSFVLIVTA. Residues 130–153 lie on the Cytoplasmic side of the membrane; the sequence is LDRYISICHPLAAHMWTNRRVHMT. A helical membrane pass occupies residues 154 to 174; that stretch reads TALALFLALMCSLPQLDAVLV. Over 175-192 the chain is Extracellular; the sequence is DFHGGKLCRPNLTTELAN. Asn185 is a glycosylation site (N-linked (GlcNAc...) asparagine). Residues 193-213 traverse the membrane as a helical segment; that stretch reads IAYSWWAFCSVFFVPLLLLIF. Topologically, residues 214 to 292 are cytoplasmic; the sequence is FYGRICFVVW…VSKSKIKTIK (79 aa). Residues 253 to 274 form a disordered region; it reads SQTSSENRVKNYSDARDKDSSR. The span at 259 to 274 shows a compositional bias: basic and acidic residues; it reads NRVKNYSDARDKDSSR. A helical transmembrane segment spans residues 293 to 313; sequence LTFSVVACFIICYTPFFTVLM. Over 314–329 the chain is Extracellular; it reads ARTYDAELSSAQTPAL. A helical transmembrane segment spans residues 330-350; that stretch reads VILSLLPSLNSCTNPWIYLAF. The Cytoplasmic portion of the chain corresponds to 351-419; it reads SGKVWCRQQS…TTALMSSSPC (69 aa).

Belongs to the G-protein coupled receptor 1 family. Vasopressin/oxytocin receptor subfamily. As to expression, present in the nervous system and peripheral tissues.

It is found in the cell membrane. In terms of biological role, acts as a receptor for octopressin. The protein is Octopressin receptor of Octopus vulgaris (Common octopus).